A 295-amino-acid polypeptide reads, in one-letter code: MRWPPWGSESQQADTPSPSTEQQAQQPPTAPAARPSRPNKDWNQSVNAFDWAAFTELRTIIPTAILTTAILGIVHIHRRYLRRFPDAVSIAPSYFRQRSILGQVTSVGDGDNFRLFHTPGGRLAGWGWLPWKKVPTSKKELRDKTVHVRLAGIDAPELAHFGRPAQPFAREAHQWLTAYLMTRRVRAYVHRQDQYQRVVASVYVRRALDFPPFRRRDVSYEMLRRGLATVYEAKAGAEFGGPGMERKYRRAEWWAKFRGLGLWKGFRRNKEWESPREFKTRMGLEDQTQGRENKS.

Residues 1–41 (MRWPPWGSESQQADTPSPSTEQQAQQPPTAPAARPSRPNKD) form a disordered region. Positions 15-36 (TPSPSTEQQAQQPPTAPAARPS) are enriched in low complexity. Residues 60–76 (IIPTAILTTAILGIVHI) form a helical membrane-spanning segment. The 168-residue stretch at 98–265 (RSILGQVTSV…KFRGLGLWKG (168 aa)) folds into the TNase-like domain. Residue R149 is part of the active site. D154 is a binding site for Ca(2+). Residues E157 and R197 contribute to the active site.

The protein belongs to the LCL3 family.

The protein localises to the mitochondrion. The protein resides in the membrane. This chain is Probable endonuclease lcl3 (lcl3), found in Aspergillus terreus (strain NIH 2624 / FGSC A1156).